The sequence spans 298 residues: Acetaldehyde dehydrogenase (298 aa).

6–9 (SGNI) lines the NAD(+) pocket. Cysteine 121 functions as the Acyl-thioester intermediate in the catalytic mechanism. NAD(+) contacts are provided by residues 152-160 (SAGPGTRAN) and asparagine 271.

This sequence belongs to the acetaldehyde dehydrogenase family.

It catalyses the reaction acetaldehyde + NAD(+) + CoA = acetyl-CoA + NADH + H(+). This is Acetaldehyde dehydrogenase from Mycobacterium avium (strain 104).